Here is a 917-residue protein sequence, read N- to C-terminus: Protein FAN (917 aa).

Positions 176–247 constitute a GRAM domain; the sequence is RLARTSFDKN…QDVRRIYKRR (72 aa). The BEACH-type PH domain occupies 189 to 286; sequence NISEKLHMEC…DRDDLYFYIA (98 aa). The 286-residue stretch at 290–575 folds into the BEACH domain; sequence EHHVAEHTAE…QLFVTPHPRR (286 aa). WD repeat units lie at residues 628 to 658, 670 to 700, 712 to 740, 761 to 791, 803 to 833, and 884 to 914; these read IHKEAVTGITVSRNGSSVFTTSQDSTLKMFS, FSNMALSSCLLLPGDATVITSSWDNNVYFYS, GHDDAVSKICWHDNRLYSASWDSTVKVWS, EHDVSVDTISLNAASTLLVSGTKEGTVNIWD, CHSGIVCDTAFSPDSRHVLSTGTDGCLNVID, and GHTGAVTCIWMNEQCSSIITGGEDRQIIFWK.

As to expression, ubiquitous.

Its function is as follows. Couples the p55 TNF-receptor (TNF-R55 / TNFR1) to neutral sphingomyelinase (N-SMASE). Specifically binds to the N-smase activation domain of TNF-R55. May regulate ceramide production by N-SMASE. The polypeptide is Protein FAN (NSMAF) (Homo sapiens (Human)).